We begin with the raw amino-acid sequence, 178 residues long: Large ribosomal subunit protein uL6 (178 aa).

This sequence belongs to the universal ribosomal protein uL6 family. Part of the 50S ribosomal subunit.

Its function is as follows. This protein binds to the 23S rRNA, and is important in its secondary structure. It is located near the subunit interface in the base of the L7/L12 stalk, and near the tRNA binding site of the peptidyltransferase center. The polypeptide is Large ribosomal subunit protein uL6 (Streptococcus agalactiae serotype Ia (strain ATCC 27591 / A909 / CDC SS700)).